Consider the following 64-residue polypeptide: MKASELRGKDAAGLNQELSELLKAQFSLRMQKATQQLQNTSQLKKVRKDIARVQTVLTQKANAK.

This sequence belongs to the universal ribosomal protein uL29 family.

This Cupriavidus necator (strain ATCC 17699 / DSM 428 / KCTC 22496 / NCIMB 10442 / H16 / Stanier 337) (Ralstonia eutropha) protein is Large ribosomal subunit protein uL29.